The sequence spans 290 residues: 4-hydroxybenzoate octaprenyltransferase (290 aa).

8 helical membrane-spanning segments follow: residues 23 to 43 (IGAL…TPGM), 46 to 66 (LWIL…GCVV), 99 to 119 (LFVV…AMTI), 141 to 161 (LPQV…FAAV), 163 to 183 (ESLP…AVAY), 212 to 232 (TLII…IGWL), 233 to 253 (NGLG…FVYQ), and 268 to 288 (AFMN…MSYW).

This sequence belongs to the UbiA prenyltransferase family. Mg(2+) is required as a cofactor.

The protein resides in the cell inner membrane. It catalyses the reaction all-trans-octaprenyl diphosphate + 4-hydroxybenzoate = 4-hydroxy-3-(all-trans-octaprenyl)benzoate + diphosphate. It participates in cofactor biosynthesis; ubiquinone biosynthesis. Catalyzes the prenylation of para-hydroxybenzoate (PHB) with an all-trans polyprenyl group. Mediates the second step in the final reaction sequence of ubiquinone-8 (UQ-8) biosynthesis, which is the condensation of the polyisoprenoid side chain with PHB, generating the first membrane-bound Q intermediate 3-octaprenyl-4-hydroxybenzoate. The chain is 4-hydroxybenzoate octaprenyltransferase from Salmonella typhi.